We begin with the raw amino-acid sequence, 421 residues long: Aspartokinase (421 aa).

7–10 (KYGG) contributes to the ATP binding site. 25–30 (RIVATK) lines the substrate pocket. Serine 41 serves as a coordination point for ATP. Substrate-binding positions include 45–49 (DTTDD), glutamate 74, 125–126 (LE), 151–154 (RGGS), and serine 154. Residues 174-175 (TD), 180-185 (FSADPR), and lysine 210 contribute to the ATP site. ACT domains lie at 267 to 348 (VTIV…GKVS) and 349 to 421 (LIGA…GTGR). Residues aspartate 274, 274-279 (DIPGYA), 292-294 (NID), glutamine 298, 360-361 (VT), 374-375 (NI), and 381-382 (SE) each bind substrate.

Belongs to the aspartokinase family. In terms of assembly, heterotetramer consisting of 2 isoforms Alpha (catalytic and regulation) and of a homodimer of 2 isoforms Beta (regulation).

The enzyme catalyses L-aspartate + ATP = 4-phospho-L-aspartate + ADP. The protein operates within amino-acid biosynthesis; L-lysine biosynthesis via DAP pathway; (S)-tetrahydrodipicolinate from L-aspartate: step 1/4. It participates in amino-acid biosynthesis; L-methionine biosynthesis via de novo pathway; L-homoserine from L-aspartate: step 1/3. Its pathway is amino-acid biosynthesis; L-threonine biosynthesis; L-threonine from L-aspartate: step 1/5. Feedback inhibition by lysine and threonine. In terms of biological role, catalyzes the phosphorylation of the beta-carboxyl group of aspartic acid with ATP to yield 4-phospho-L-aspartate, which is involved in the branched biosynthetic pathway leading to the biosynthesis of amino acids lysine, threonine, isoleucine and methionine. In Mycobacterium bovis (strain ATCC BAA-935 / AF2122/97), this protein is Aspartokinase (ask).